The sequence spans 451 residues: Tubulin gamma-2 chain (451 aa).

Position 131 is a phosphoserine; by BRSK1 (S131). 142 to 148 (AGGTGSG) serves as a coordination point for GTP.

Belongs to the tubulin family. Component of the gamma-tubulin ring complex (gTuRC) consisting of TUBGCP2, TUBGCP3, TUBGCP4, TUBGCP5 and TUBGCP6 and gamma-tubulin TUBG1 or TUBG2. TUBGCP2, TUBGCP3, TUBGCP4, TUBGCP5 and TUBGCP6 assemble in a 5:5:2:1:1 stoichiometry; each is associated with a gamma-tubulin, thereby arranging 14 gamma-tubulins in a helical manner. Gamma-tubulin at the first position is blocked by TUBGCP3 at the last position, allowing 13 protafilaments to grow into a microtubule. Interacts with alpha-beta tubulin heterodimers; the interaction allows microtubules to nucleate from the gTuRC. Post-translationally, phosphorylation at Ser-131 by BRSK1 regulates centrosome duplication, possibly by mediating relocation of gamma-tubulin and its associated proteins from the cytoplasm to the centrosome.

The protein localises to the cytoplasm. It is found in the cytoskeleton. The protein resides in the microtubule organizing center. Its subcellular location is the centrosome. Functionally, tubulin is the major constituent of microtubules, protein filaments consisting of alpha- and beta-tubulin heterodimers. Gamma-tubulin is a key component of the gamma-tubulin ring complex (gTuRC) which mediates microtubule nucleation. The gTuRC regulates the minus-end nucleation of alpha-beta tubulin heterodimers that grow into microtubule protafilaments, a critical step in centrosome duplication and spindle formation. This chain is Tubulin gamma-2 chain (Tubg2), found in Mus musculus (Mouse).